Here is a 140-residue protein sequence, read N- to C-terminus: Cytochrome B5 isoform D (140 aa).

A Cytochrome b5 heme-binding domain is found at Gly-5–Asp-81. Heme is bound by residues His-40 and His-64. The helical transmembrane segment at Phe-109–Ile-129 threads the bilayer.

It belongs to the cytochrome b5 family. In terms of assembly, interacts with CER1, BI-1, FAH1 and FAH2. As to expression, expressed in roots, stems, leaves, flowers and siliques.

It is found in the endoplasmic reticulum membrane. Functionally, membrane bound hemoprotein which function as an electron carrier for several membrane bound oxygenases, including fatty acid desaturases. This is Cytochrome B5 isoform D from Arabidopsis thaliana (Mouse-ear cress).